Reading from the N-terminus, the 443-residue chain is Probable cytosolic iron-sulfur protein assembly protein 1 (443 aa).

Disordered regions lie at residues 1-27 and 95-124; these read MSDP…WQTA and REEQ…DDDE. The segment covering 8–21 has biased composition (low complexity); that stretch reads TLSPLATLTPPSSS. 2 WD repeats span residues 14–57 and 61–103; these read TLTP…LLHS and GHKR…GNED. Acidic residues predominate over residues 113-124; it reads AEDEDGRDDDDE. WD repeat units follow at residues 135-174, 180-219, 221-248, 255-294, 323-362, and 391-440; these read GHES…NFET, EHDG…WVQV, CIAG…KDFR, SEEQ…RAEN, VHER…QTPN, and AHSV…DPPQ.

The protein belongs to the WD repeat CIA1 family.

In terms of biological role, essential component of the cytosolic iron-sulfur (Fe/S) protein assembly machinery. Required for the maturation of extramitochondrial Fe/S proteins. The chain is Probable cytosolic iron-sulfur protein assembly protein 1 from Phaeosphaeria nodorum (strain SN15 / ATCC MYA-4574 / FGSC 10173) (Glume blotch fungus).